Consider the following 129-residue polypeptide: Protein BEX2 (129 aa).

The tract at residues methionine 1–valine 38 is disordered. Basic and acidic residues predominate over residues glutamate 15–proline 36. Arginine 51 carries the omega-N-methylarginine modification. The segment at serine 108–proline 129 is disordered. Residues proline 116–proline 129 are compositionally biased toward basic and acidic residues. A his cluster region spans residues histidine 118–histidine 122. Position 126 (cysteine 126) interacts with Zn(2+).

This sequence belongs to the BEX family. Interacts with LMO2, possibly leading to regulate the transcriptional activity of a DNA-binding complex containing LMO2. Interacts with OMP.

The protein localises to the nucleus. Its subcellular location is the cytoplasm. Its function is as follows. Regulator of mitochondrial apoptosis and G1 cell cycle. Regulates the level of PP2A regulatory subunit B and PP2A phosphatase activity. In absence of reductive stress, acts as a pseudosubstrate for the CRL2(FEM1B) complex: associates with FEM1B via zinc, thereby preventing association between FEM1B and its substrates. The polypeptide is Protein BEX2 (Bex2) (Rattus norvegicus (Rat)).